Here is a 177-residue protein sequence, read N- to C-terminus: Large ribosomal subunit protein uL6 (177 aa).

Belongs to the universal ribosomal protein uL6 family. As to quaternary structure, part of the 50S ribosomal subunit.

Functionally, this protein binds to the 23S rRNA, and is important in its secondary structure. It is located near the subunit interface in the base of the L7/L12 stalk, and near the tRNA binding site of the peptidyltransferase center. This Neisseria meningitidis serogroup B (strain ATCC BAA-335 / MC58) protein is Large ribosomal subunit protein uL6.